Here is a 498-residue protein sequence, read N- to C-terminus: Probable cytosol aminopeptidase (498 aa).

Mn(2+) contacts are provided by K263 and D268. K275 is a catalytic residue. D286, D345, and E347 together coordinate Mn(2+). Residue R349 is part of the active site.

It belongs to the peptidase M17 family. It depends on Mn(2+) as a cofactor.

It localises to the cytoplasm. It carries out the reaction Release of an N-terminal amino acid, Xaa-|-Yaa-, in which Xaa is preferably Leu, but may be other amino acids including Pro although not Arg or Lys, and Yaa may be Pro. Amino acid amides and methyl esters are also readily hydrolyzed, but rates on arylamides are exceedingly low.. The catalysed reaction is Release of an N-terminal amino acid, preferentially leucine, but not glutamic or aspartic acids.. Functionally, presumably involved in the processing and regular turnover of intracellular proteins. Catalyzes the removal of unsubstituted N-terminal amino acids from various peptides. This is Probable cytosol aminopeptidase from Rhodopseudomonas palustris (strain BisA53).